The sequence spans 496 residues: Glutamyl-tRNA(Gln) amidotransferase subunit A (496 aa).

Active-site charge relay system residues include Lys75 and Ser150. Ser174 (acyl-ester intermediate) is an active-site residue.

The protein belongs to the amidase family. GatA subfamily. As to quaternary structure, heterotrimer of A, B and C subunits.

The catalysed reaction is L-glutamyl-tRNA(Gln) + L-glutamine + ATP + H2O = L-glutaminyl-tRNA(Gln) + L-glutamate + ADP + phosphate + H(+). Its function is as follows. Allows the formation of correctly charged Gln-tRNA(Gln) through the transamidation of misacylated Glu-tRNA(Gln) in organisms which lack glutaminyl-tRNA synthetase. The reaction takes place in the presence of glutamine and ATP through an activated gamma-phospho-Glu-tRNA(Gln). The polypeptide is Glutamyl-tRNA(Gln) amidotransferase subunit A (Burkholderia ambifaria (strain MC40-6)).